A 45-amino-acid polypeptide reads, in one-letter code: Thymosin beta-15A (45 aa).

2 stretches are compositionally biased toward basic and acidic residues: residues 1–27 (MSDK…EEKN) and 35–45 (IQQEKECVQTS). The interval 1–45 (MSDKPDLSEVEKFDRSKLKKTNTEEKNTLPSKETIQQEKECVQTS) is disordered.

Belongs to the thymosin beta family. As to expression, neuroblastoma-specific.

The protein resides in the cytoplasm. The protein localises to the cytoskeleton. In terms of biological role, plays an important role in the organization of the cytoskeleton. Binds to and sequesters actin monomers (G actin) and therefore inhibits actin polymerization. In Homo sapiens (Human), this protein is Thymosin beta-15A (TMSB15A).